The following is a 401-amino-acid chain: Ribosomal RNA large subunit methyltransferase G (401 aa).

The protein belongs to the methyltransferase superfamily. RlmG family.

It localises to the cytoplasm. The catalysed reaction is guanosine(1835) in 23S rRNA + S-adenosyl-L-methionine = N(2)-methylguanosine(1835) in 23S rRNA + S-adenosyl-L-homocysteine + H(+). Functionally, specifically methylates the guanine in position 1835 (m2G1835) of 23S rRNA. This chain is Ribosomal RNA large subunit methyltransferase G, found in Shewanella loihica (strain ATCC BAA-1088 / PV-4).